Here is a 431-residue protein sequence, read N- to C-terminus: 5-methylthioadenosine/S-adenosylhomocysteine deaminase (431 aa).

Positions 66 and 68 each coordinate Zn(2+). Positions 95, 147, and 185 each coordinate substrate. Histidine 212 contributes to the Zn(2+) binding site. Substrate contacts are provided by glutamate 215 and aspartate 300. Aspartate 300 lines the Zn(2+) pocket.

It belongs to the metallo-dependent hydrolases superfamily. MTA/SAH deaminase family. Zn(2+) serves as cofactor.

The enzyme catalyses S-adenosyl-L-homocysteine + H2O + H(+) = S-inosyl-L-homocysteine + NH4(+). It carries out the reaction S-methyl-5'-thioadenosine + H2O + H(+) = S-methyl-5'-thioinosine + NH4(+). Its function is as follows. Catalyzes the deamination of 5-methylthioadenosine and S-adenosyl-L-homocysteine into 5-methylthioinosine and S-inosyl-L-homocysteine, respectively. Is also able to deaminate adenosine. The sequence is that of 5-methylthioadenosine/S-adenosylhomocysteine deaminase from Desulfitobacterium hafniense (strain DSM 10664 / DCB-2).